Consider the following 244-residue polypeptide: 1-(5-phosphoribosyl)-5-[(5-phosphoribosylamino)methylideneamino] imidazole-4-carboxamide isomerase (244 aa).

The active-site Proton acceptor is the D8. D129 (proton donor) is an active-site residue.

Belongs to the HisA/HisF family.

The protein resides in the cytoplasm. The catalysed reaction is 1-(5-phospho-beta-D-ribosyl)-5-[(5-phospho-beta-D-ribosylamino)methylideneamino]imidazole-4-carboxamide = 5-[(5-phospho-1-deoxy-D-ribulos-1-ylimino)methylamino]-1-(5-phospho-beta-D-ribosyl)imidazole-4-carboxamide. Its pathway is amino-acid biosynthesis; L-histidine biosynthesis; L-histidine from 5-phospho-alpha-D-ribose 1-diphosphate: step 4/9. The chain is 1-(5-phosphoribosyl)-5-[(5-phosphoribosylamino)methylideneamino] imidazole-4-carboxamide isomerase from Bradyrhizobium sp. (strain ORS 278).